Reading from the N-terminus, the 240-residue chain is MKAATDQELRKLIVLYNNVMEVMEHDAAKSMRDDNRAYGGFVRAAKGKIQELITERLVRTVWDVEMGENPERLSINSKKIKIPILRSYVDSINDENLKKYISSNILKYSYGLSVDKHVFIDNKFVLGIECKAYTENAMLKRILVDFYLLKTKFPKLNCFLFQLESQLGGDYSECNKFPIGSYPTRTIMSYFKNVDLNIVTLLEGERKVDRPINKPQFFKPLKVEHLEVAIGYLQESLSEI.

The catalysed reaction is Endonucleolytic cleavage of DNA to give specific double-stranded fragments with terminal 5'-phosphates.. Its function is as follows. A P subtype restriction enzyme that recognizes the double-stranded sequence 5'-CTNAG-3' and cleaves after C-1. The polypeptide is Type II restriction enzyme DdeI (ddeIR) (Desulfomicrobium norvegicum (strain DSM 1741 / NCIMB 8310) (Desulfovibrio baculatus (strain Norway 4))).